Here is a 93-residue protein sequence, read N- to C-terminus: Phosphoribosyl-ATP pyrophosphatase (93 aa).

This sequence belongs to the PRA-PH family.

It localises to the cytoplasm. The catalysed reaction is 1-(5-phospho-beta-D-ribosyl)-ATP + H2O = 1-(5-phospho-beta-D-ribosyl)-5'-AMP + diphosphate + H(+). It participates in amino-acid biosynthesis; L-histidine biosynthesis; L-histidine from 5-phospho-alpha-D-ribose 1-diphosphate: step 2/9. This Mycobacterium leprae (strain Br4923) protein is Phosphoribosyl-ATP pyrophosphatase.